We begin with the raw amino-acid sequence, 923 residues long: Protein prickle (923 aa).

The interval 1-196 (MSYPYQKSHH…HPFHSPASAA (196 aa)) is disordered. Positions 11–34 (QTQQPQQNGHPQHQLMLQQQQQAD) are enriched in low complexity. Basic residues predominate over residues 37-49 (PHHHHHHHVHHAT). Composition is skewed to low complexity over residues 59–73 (RSPL…LYSG) and 106–118 (MPGM…PPGM). A compositionally biased stretch (gly residues) spans 122 to 134 (LGGGGGGGGGGSA). Low complexity-rich tracts occupy residues 152–169 (STVT…SARS) and 184–196 (SSHH…ASAA). Residues 275 to 383 (GGGHNYSQSD…TVKQITTTLI (109 aa)) form the PET domain. LIM zinc-binding domains follow at residues 382 to 446 (LICE…ETLK), 447 to 507 (PRCS…MFAE), and 508 to 570 (YCDY…GEPP). Disordered stretches follow at residues 571-668 (TPSD…LDLT) and 703-867 (GPIA…SSAD). Residues 709–718 (NGNGPTGGGP) are compositionally biased toward gly residues. The span at 738 to 748 (ESPSFSGTNSP) shows a compositional bias: polar residues. Residues 777 to 786 (HSIKEVRFEG) are compositionally biased toward basic and acidic residues. A compositionally biased stretch (polar residues) spans 792-805 (LPRTKSYCQRNGGQ). A compositionally biased stretch (acidic residues) spans 817 to 827 (SDDDELAEDET). Over residues 840–852 (QREQQRPVDDSDA) the composition is skewed to basic and acidic residues. Positions 853–865 (RSVCSTCSSSSSS) are enriched in low complexity.

Belongs to the prickle / espinas / testin family. As to quaternary structure, interacts with dsh; PET and LIM domains interact with dsh DEP domain, in wing cells. Interacts with Vang in photoreceptor cells.

The protein localises to the cell membrane. In terms of biological role, acts in a planar cell polarity (PCP) complex; polarization along the apical/basal axis of epithelial cells. PCP signaling in the wing disk requires the receptor fz and the cytoplasmic proteins dsh and pk. These act in a feedback loop leading to activation of the jnk cascade and subsequent polarized arrangement of hairs and bristles. Dgo and pk compete with one another for dsh binding, thereby modulating fz dsh activity and ensuring tight control over fz PCP signaling. Vang, stan and pk function together to regulate the establishment of tissue polarity in the adult eye. In Anopheles gambiae (African malaria mosquito), this protein is Protein prickle.